Reading from the N-terminus, the 271-residue chain is MSALLGLRPEVQDTCISLGLMLLFVLFVGLARVIARQQLHRPVVHAFVLEFLATFQLCCCTHELQVLSEQDSAHPTWTLTLIYFFSLVHGLTLVGTASNPCGVMMQMILGGMSPEMGAVRLLAQLVSALCSRYCISALWSLSLTKYHYDERILACRNPIHTDMSKAIIIEAICSFIFHSALLHFQEVRTKLRIHLLAALITFLAYAGGSLTGALFNPALALSLHFPCFDELFYKFFVVYWLAPSVGVLMMILMFSFFLPWLHNNQMTNKKE.

Topologically, residues 1–14 (MSALLGLRPEVQDT) are cytoplasmic. A helical transmembrane segment spans residues 15–35 (CISLGLMLLFVLFVGLARVIA). The Lumenal segment spans residues 36 to 41 (RQQLHR). The helical transmembrane segment at 42-62 (PVVHAFVLEFLATFQLCCCTH) threads the bilayer. Topologically, residues 63-76 (ELQVLSEQDSAHPT) are cytoplasmic. A helical transmembrane segment spans residues 77 to 97 (WTLTLIYFFSLVHGLTLVGTA). Topologically, residues 98–166 (SNPCGVMMQM…NPIHTDMSKA (69 aa)) are lumenal. The NPC motif lies at 99-101 (NPC). A helical transmembrane segment spans residues 167–187 (IIIEAICSFIFHSALLHFQEV). Topologically, residues 188-194 (RTKLRIH) are cytoplasmic. Residues 195 to 215 (LLAALITFLAYAGGSLTGALF) form a helical membrane-spanning segment. An NPA motif is present at residues 216–218 (NPA). Residues 216-234 (NPALALSLHFPCFDELFYK) are Lumenal-facing. Residues 235–255 (FFVVYWLAPSVGVLMMILMFS) form a helical membrane-spanning segment. Residues 256–271 (FFLPWLHNNQMTNKKE) are Cytoplasmic-facing.

It belongs to the MIP/aquaporin (TC 1.A.8) family. AQP11/AQP12 subfamily. In terms of assembly, homodimer; disulfide-linked. Homotetramer. Can also form homomultimer. Not glycosylated. In terms of tissue distribution, highly expressed in the S1 proximal tubule segment,. Expressed in the testis, kidney, and liver. Weakly expressed in the heart, brain, and muscle. Highly expressed in the testis. Expressed in the proximal tubule of the cortex of 8-day-old mouse kidney. Expressed in retina specifically at retinal Mueller glial cells. Expressed in brain. Expressed abundantly at the choroid plexus but also expressed weakly in the parenchyma. Expressed at the capillary endothelium in the cerebral white matter. Expressed in adult testis, in the elongated spermatids (ES) and in residual bodies inside Sertoli cells.

Its subcellular location is the endoplasmic reticulum membrane. It is found in the cytoplasmic vesicle membrane. The protein localises to the cell membrane. The enzyme catalyses H2O(in) = H2O(out). The catalysed reaction is glycerol(in) = glycerol(out). It catalyses the reaction H2O2(out) = H2O2(in). In terms of biological role, channel protein that facilitates the transport of water, glycerol and hydrogen peroxide across membrane of cell or organelles guaranteeing intracellular homeostasis in several organes like liver, kidney and brain. In situation of stress, participates in endoplasmic reticulum (ER) homeostasis by regulating redox homeostasis through the transport of hydrogen peroxide across the endoplasmic reticulum membrane thereby regulating the oxidative stress through the NADPH oxidase 2 pathway. Plays a role by maintaining an environment suitable for translation or protein foldings in the ER lumen namely by participating in the PKD1 glycosylation processing resulting in regulation of PKD1 membrane trafficking thereby preventing the accumulation of unfolding protein in ER. Plays a role in the proximal tubule function by regulating its endosomal acidification. May play a role in postnatal kidney development. In Mus musculus (Mouse), this protein is Aquaporin-11.